A 242-amino-acid polypeptide reads, in one-letter code: NH(3)-dependent NAD(+) synthetase (242 aa).

27–34 (GISGGIDS) lines the ATP pocket. Aspartate 33 serves as a coordination point for Mg(2+). Arginine 109 is a deamido-NAD(+) binding site. Threonine 129 contributes to the ATP binding site. Mg(2+) is bound at residue glutamate 134. The deamido-NAD(+) site is built by lysine 142 and aspartate 149. Residues lysine 158 and threonine 180 each coordinate ATP. Deamido-NAD(+) is bound at residue 231-232 (HK).

It belongs to the NAD synthetase family. As to quaternary structure, homodimer.

The catalysed reaction is deamido-NAD(+) + NH4(+) + ATP = AMP + diphosphate + NAD(+) + H(+). It functions in the pathway cofactor biosynthesis; NAD(+) biosynthesis; NAD(+) from deamido-NAD(+) (ammonia route): step 1/1. In terms of biological role, catalyzes the ATP-dependent amidation of deamido-NAD to form NAD. Uses ammonia as a nitrogen source. The chain is NH(3)-dependent NAD(+) synthetase from Thermoplasma volcanium (strain ATCC 51530 / DSM 4299 / JCM 9571 / NBRC 15438 / GSS1).